We begin with the raw amino-acid sequence, 648 residues long: Macrolide export ATP-binding/permease protein MacB (648 aa).

Residues Leu5–Thr243 form the ABC transporter domain. Gly41 to Ser48 serves as a coordination point for ATP. Transmembrane regions (helical) follow at residues Leu273 to Gly293, Leu523 to Ile543, Ala576 to Phe596, and Leu600 to Cys620.

It belongs to the ABC transporter superfamily. Macrolide exporter (TC 3.A.1.122) family. As to quaternary structure, homodimer. Part of the tripartite efflux system MacAB-TolC, which is composed of an inner membrane transporter, MacB, a periplasmic membrane fusion protein, MacA, and an outer membrane component, TolC. The complex forms a large protein conduit and can translocate molecules across both the inner and outer membranes. Interacts with MacA.

Its subcellular location is the cell inner membrane. In terms of biological role, part of the tripartite efflux system MacAB-TolC. MacB is a non-canonical ABC transporter that contains transmembrane domains (TMD), which form a pore in the inner membrane, and an ATP-binding domain (NBD), which is responsible for energy generation. Confers resistance against macrolides. The chain is Macrolide export ATP-binding/permease protein MacB from Shigella sonnei (strain Ss046).